Reading from the N-terminus, the 143-residue chain is Putative pre-16S rRNA nuclease (143 aa).

The protein belongs to the YqgF nuclease family.

The protein resides in the cytoplasm. Its function is as follows. Could be a nuclease involved in processing of the 5'-end of pre-16S rRNA. This Marinobacter nauticus (strain ATCC 700491 / DSM 11845 / VT8) (Marinobacter aquaeolei) protein is Putative pre-16S rRNA nuclease.